The sequence spans 299 residues: Probable lipid kinase YegS-like (299 aa).

Residues glutamate 2 to histidine 133 enclose the DAGKc domain. Residues threonine 40, glycine 66–glutamate 72, and threonine 95 each bind ATP. Residues leucine 215, aspartate 218, and leucine 220 each contribute to the Mg(2+) site. Glutamate 271 acts as the Proton acceptor in catalysis.

It belongs to the diacylglycerol/lipid kinase family. YegS lipid kinase subfamily. Mg(2+) serves as cofactor. Ca(2+) is required as a cofactor.

The protein localises to the cytoplasm. Probably phosphorylates lipids; the in vivo substrate is unknown. This Pectobacterium atrosepticum (strain SCRI 1043 / ATCC BAA-672) (Erwinia carotovora subsp. atroseptica) protein is Probable lipid kinase YegS-like.